The following is a 438-amino-acid chain: Argininosuccinate lyase (438 aa).

The protein belongs to the lyase 1 family. Argininosuccinate lyase subfamily.

It localises to the cytoplasm. It carries out the reaction 2-(N(omega)-L-arginino)succinate = fumarate + L-arginine. Its pathway is amino-acid biosynthesis; L-arginine biosynthesis; L-arginine from L-ornithine and carbamoyl phosphate: step 3/3. This Clostridium tetani (strain Massachusetts / E88) protein is Argininosuccinate lyase.